The sequence spans 241 residues: Peroxisomal membrane protein 11C (241 aa).

At 1 to 124 (MASLSGLASA…ARVLHVDSSR (124 aa)) the chain is on the cytoplasmic side. Residues 125–149 (WWTLSTTLWALSLLLGVARSLWMLL) traverse the membrane as a helical segment. Topologically, residues 150 to 211 (KLRQRLRSPT…GVLWAGRFPP (62 aa)) are lumenal. Residues 212-227 (WLVGLMGTISSILSMY) form a helical membrane-spanning segment. Topologically, residues 228–241 (QAARAGGQAEATTP) are cytoplasmic.

Belongs to the peroxin-11 family. In terms of assembly, homodimer. Heterodimer with either PEX11A or PEX11B. Interacts with FIS1.

The protein localises to the peroxisome membrane. Functionally, promotes membrane protrusion and elongation on the peroxisomal surface. The polypeptide is Peroxisomal membrane protein 11C (PEX11G) (Homo sapiens (Human)).